Reading from the N-terminus, the 257-residue chain is MDSPLNDGSHHPPPHAPHPLADYQFSAEEVKALRECNTESFFQRSLPFGTGLGLLAYFGVKNGYLQGHVKYGAVPKVVMGVILGYFVGKFSYQQKCAEKIMRLPNSHLGELLRQRRQGGGVISSITPDENLGRAFTLAPFSPSSADVYSDEAYQPGRSTSLNLDTESRPTLSGLDDIYRPTLDSGSMLEAELPLEPSKPGQSYEDLRRRNREEYSKHQQSPYSRPYEPPVAVQQRPVEQAQSEPAGRKNQYGDSWTD.

Disordered stretches follow at residues 1 to 20 and 148 to 257; these read MDSP…PHPL and YSDE…SWTD. An OCIA domain is found at 1 to 110; sequence MDSPLNDGSH…MRLPNSHLGE (110 aa). Positions 156–170 are enriched in polar residues; it reads GRSTSLNLDTESRPT. The span at 204–216 shows a compositional bias: basic and acidic residues; it reads EDLRRRNREEYSK.

This sequence belongs to the OCIAD1 family. As to quaternary structure, interacts with STAT3 and ARF1. Expressed in all cells of the primary lymph gland lobe.

The protein resides in the endosome. In terms of biological role, maintains stem cell potency. Involved in endocytic pathways that mediate signaling during hematopoiesis. The protein is OCIA domain-containing protein 1 (asrij) of Drosophila melanogaster (Fruit fly).